Consider the following 146-residue polypeptide: VHWSAEEKQLITGLWGKVNVAQCGGEALARLLIVYPWTQRFFSSFGNLSSPSAILGNPMVRAHGKKVLTSFGDAVKNMDNIKNTFAQLSELHCDKLHVDPENFRLLGDILIIVLAAHFAKDFTPECQAAWEKLVRVVAHALARKYH.

Positions 2–146 (HWSAEEKQLI…VAHALARKYH (145 aa)) constitute a Globin domain. H63 and H92 together coordinate heme b.

This sequence belongs to the globin family. In terms of assembly, heterotetramer of two alpha chains and two beta chains. In terms of tissue distribution, red blood cells.

Involved in oxygen transport from the lung to the various peripheral tissues. In Eudyptes chrysocome (Western rockhopper penguin), this protein is Hemoglobin subunit beta (HBB).